Here is a 490-residue protein sequence, read N- to C-terminus: Ketol-acid reductoisomerase (NADP(+)) (490 aa).

The region spanning 16-207 (INKCRFMKKE…GGHRAGVLES (192 aa)) is the KARI N-terminal Rossmann domain. Residues 44–47 (CGAQ), Lys67, Ser77, and 107–109 (DKQ) contribute to the NADP(+) site. His131 is a catalytic residue. Gly157 serves as a coordination point for NADP(+). 2 KARI C-terminal knotted domains span residues 208 to 343 (SFIA…TAPV) and 344 to 483 (YNEK…MKKM). Mg(2+) is bound by residues Asp216, Glu220, Glu388, and Glu392. Residue Ser413 coordinates substrate.

Belongs to the ketol-acid reductoisomerase family. The cofactor is Mg(2+).

The catalysed reaction is (2R)-2,3-dihydroxy-3-methylbutanoate + NADP(+) = (2S)-2-acetolactate + NADPH + H(+). It carries out the reaction (2R,3R)-2,3-dihydroxy-3-methylpentanoate + NADP(+) = (S)-2-ethyl-2-hydroxy-3-oxobutanoate + NADPH + H(+). Its pathway is amino-acid biosynthesis; L-isoleucine biosynthesis; L-isoleucine from 2-oxobutanoate: step 2/4. It participates in amino-acid biosynthesis; L-valine biosynthesis; L-valine from pyruvate: step 2/4. Involved in the biosynthesis of branched-chain amino acids (BCAA). Catalyzes an alkyl-migration followed by a ketol-acid reduction of (S)-2-acetolactate (S2AL) to yield (R)-2,3-dihydroxy-isovalerate. In the isomerase reaction, S2AL is rearranged via a Mg-dependent methyl migration to produce 3-hydroxy-3-methyl-2-ketobutyrate (HMKB). In the reductase reaction, this 2-ketoacid undergoes a metal-dependent reduction by NADPH to yield (R)-2,3-dihydroxy-isovalerate. In Buchnera aphidicola subsp. Acyrthosiphon pisum (strain 5A), this protein is Ketol-acid reductoisomerase (NADP(+)).